Reading from the N-terminus, the 349-residue chain is Putative ABC transporter permease protein MJ0087 (349 aa).

Helical transmembrane passes span Ile15–Val35, Ile69–Ile89, Met100–Gly120, Met135–Ala155, Ile166–Phe186, Ala206–Met226, Leu254–Ile274, Phe295–Ala315, and Ile318–Phe338.

It belongs to the binding-protein-dependent transport system permease family. FecCD subfamily.

The protein resides in the cell membrane. Functionally, probably part of a binding-protein-dependent transport system. Probably responsible for the translocation of the substrate across the membrane. This is Putative ABC transporter permease protein MJ0087 from Methanocaldococcus jannaschii (strain ATCC 43067 / DSM 2661 / JAL-1 / JCM 10045 / NBRC 100440) (Methanococcus jannaschii).